The chain runs to 370 residues: Phosphoserine aminotransferase (370 aa).

Methionine 1 is modified (N-acetylmethionine). The O-phospho-L-serine site is built by histidine 44 and arginine 45. At lysine 51 the chain carries N6-acetyllysine. Residues glycine 79, cysteine 80, and tryptophan 107 each coordinate pyridoxal 5'-phosphate. N6-acetyllysine is present on lysine 127. 3 residues coordinate pyridoxal 5'-phosphate: threonine 156, aspartate 176, and glutamine 199. At lysine 200 the chain carries N6-(pyridoxal phosphate)lysine. Pyridoxal 5'-phosphate is bound by residues asparagine 241 and threonine 242. 3 positions are modified to N6-acetyllysine: lysine 269, lysine 318, and lysine 323. Serine 331 is subject to Phosphoserine. Lysine 333 carries the post-translational modification N6-acetyllysine. 3 residues coordinate O-phospho-L-serine: histidine 335, arginine 336, and arginine 342.

The protein belongs to the class-V pyridoxal-phosphate-dependent aminotransferase family. SerC subfamily. As to quaternary structure, homodimer. Pyridoxal 5'-phosphate serves as cofactor. In terms of tissue distribution, expressed at high levels in the brain, liver, kidney and pancreas, and very weakly expressed in the thymus, prostate, testis and colon.

The catalysed reaction is O-phospho-L-serine + 2-oxoglutarate = 3-phosphooxypyruvate + L-glutamate. It functions in the pathway amino-acid biosynthesis; L-serine biosynthesis; L-serine from 3-phospho-D-glycerate: step 2/3. Its activity is regulated as follows. Phosphoserine transaminase activity is strongly stimulated by increasing the ionic strength. Functionally, involved in L-serine biosynthesis via the phosphorylated pathway, a three-step pathway converting the glycolytic intermediate 3-phospho-D-glycerate into L-serine. Catalyzes the second step, that is the pyridoxal 5'-phosphate-dependent transamination of 3-phosphohydroxypyruvate and L-glutamate to O-phosphoserine (OPS) and alpha-ketoglutarate. The polypeptide is Phosphoserine aminotransferase (Homo sapiens (Human)).